Here is a 306-residue protein sequence, read N- to C-terminus: Non-specific ribonucleoside hydrolase RihC (306 aa).

H235 is an active-site residue.

This sequence belongs to the IUNH family. RihC subfamily.

Functionally, hydrolyzes both purine and pyrimidine ribonucleosides with a broad-substrate specificity. The polypeptide is Non-specific ribonucleoside hydrolase RihC (Salmonella paratyphi C (strain RKS4594)).